The chain runs to 370 residues: Putative agmatine deiminase (370 aa).

The active-site Amidino-cysteine intermediate is Cys-361.

This sequence belongs to the agmatine deiminase family.

The catalysed reaction is agmatine + H2O = N-carbamoylputrescine + NH4(+). In Shewanella sp. (strain MR-4), this protein is Putative agmatine deiminase.